The chain runs to 220 residues: Iron-sulfur cluster repair protein YtfE (220 aa).

It belongs to the RIC family. YtfE subfamily. In terms of assembly, homodimer.

It localises to the cytoplasm. Functionally, di-iron-containing protein involved in the repair of iron-sulfur clusters damaged by oxidative and nitrosative stress conditions. The polypeptide is Iron-sulfur cluster repair protein YtfE (Escherichia coli O157:H7).